The following is a 268-amino-acid chain: Thiazole synthase (268 aa).

The active-site Schiff-base intermediate with DXP is Lys108. Residues Gly169, 195 to 196 (AG), and 217 to 218 (NS) contribute to the 1-deoxy-D-xylulose 5-phosphate site. The disordered stretch occupies residues 248-268 (RLKENPLASPSSPLDGVISNN). Residues 255–268 (ASPSSPLDGVISNN) are compositionally biased toward polar residues.

Belongs to the ThiG family. In terms of assembly, homotetramer. Forms heterodimers with either ThiH or ThiS.

It is found in the cytoplasm. The catalysed reaction is [ThiS sulfur-carrier protein]-C-terminal-Gly-aminoethanethioate + 2-iminoacetate + 1-deoxy-D-xylulose 5-phosphate = [ThiS sulfur-carrier protein]-C-terminal Gly-Gly + 2-[(2R,5Z)-2-carboxy-4-methylthiazol-5(2H)-ylidene]ethyl phosphate + 2 H2O + H(+). It functions in the pathway cofactor biosynthesis; thiamine diphosphate biosynthesis. Functionally, catalyzes the rearrangement of 1-deoxy-D-xylulose 5-phosphate (DXP) to produce the thiazole phosphate moiety of thiamine. Sulfur is provided by the thiocarboxylate moiety of the carrier protein ThiS. In vitro, sulfur can be provided by H(2)S. The sequence is that of Thiazole synthase from Prochlorococcus marinus (strain NATL2A).